Here is a 205-residue protein sequence, read N- to C-terminus: High frequency lysogenization protein HflD homolog (205 aa).

It belongs to the HflD family.

It is found in the cytoplasm. The protein localises to the cell inner membrane. The chain is High frequency lysogenization protein HflD homolog from Shewanella baltica (strain OS155 / ATCC BAA-1091).